The chain runs to 270 residues: Formamidopyrimidine-DNA glycosylase (270 aa).

The active-site Schiff-base intermediate with DNA is proline 2. Glutamate 3 acts as the Proton donor in catalysis. Lysine 58 functions as the Proton donor; for beta-elimination activity in the catalytic mechanism. DNA-binding residues include histidine 91, arginine 109, and arginine 151. The segment at 236–270 (MVYNRQEEPCRLCGTPIRQIRQGQRSTYYCPLCQP) adopts an FPG-type zinc-finger fold. Arginine 260 functions as the Proton donor; for delta-elimination activity in the catalytic mechanism.

It belongs to the FPG family. In terms of assembly, monomer. It depends on Zn(2+) as a cofactor.

The catalysed reaction is Hydrolysis of DNA containing ring-opened 7-methylguanine residues, releasing 2,6-diamino-4-hydroxy-5-(N-methyl)formamidopyrimidine.. The enzyme catalyses 2'-deoxyribonucleotide-(2'-deoxyribose 5'-phosphate)-2'-deoxyribonucleotide-DNA = a 3'-end 2'-deoxyribonucleotide-(2,3-dehydro-2,3-deoxyribose 5'-phosphate)-DNA + a 5'-end 5'-phospho-2'-deoxyribonucleoside-DNA + H(+). Its function is as follows. Involved in base excision repair of DNA damaged by oxidation or by mutagenic agents. Acts as a DNA glycosylase that recognizes and removes damaged bases. Has a preference for oxidized purines, such as 7,8-dihydro-8-oxoguanine (8-oxoG). Has AP (apurinic/apyrimidinic) lyase activity and introduces nicks in the DNA strand. Cleaves the DNA backbone by beta-delta elimination to generate a single-strand break at the site of the removed base with both 3'- and 5'-phosphates. The polypeptide is Formamidopyrimidine-DNA glycosylase (Chromobacterium violaceum (strain ATCC 12472 / DSM 30191 / JCM 1249 / CCUG 213 / NBRC 12614 / NCIMB 9131 / NCTC 9757 / MK)).